The sequence spans 393 residues: Aspartate aminotransferase (393 aa).

L-aspartate contacts are provided by G38, W124, and N174. Residue K237 is modified to N6-(pyridoxal phosphate)lysine.

This sequence belongs to the class-I pyridoxal-phosphate-dependent aminotransferase family. Homodimer. Pyridoxal 5'-phosphate is required as a cofactor.

It is found in the cytoplasm. It catalyses the reaction L-aspartate + 2-oxoglutarate = oxaloacetate + L-glutamate. The sequence is that of Aspartate aminotransferase (aspB) from Bacillus subtilis (strain 168).